The following is a 411-amino-acid chain: UPF0754 membrane protein Npun_R4433 (411 aa).

2 consecutive transmembrane segments (helical) span residues Trp-3–Thr-23 and Ile-387–Val-407.

This sequence belongs to the UPF0754 family.

It localises to the cell inner membrane. The protein is UPF0754 membrane protein Npun_R4433 of Nostoc punctiforme (strain ATCC 29133 / PCC 73102).